Here is a 312-residue protein sequence, read N- to C-terminus: Malate dehydrogenase (312 aa).

NAD(+)-binding positions include 12 to 17 (GAGFTG) and Asp36. Arg87 and Arg93 together coordinate substrate. NAD(+) is bound by residues Asn100 and 123–125 (LTN). Position 125 (Asn125) interacts with substrate. Phosphoserine is present on Ser149. Arg156 is a binding site for substrate. The active-site Proton acceptor is His180.

This sequence belongs to the LDH/MDH superfamily. MDH type 3 family.

The catalysed reaction is (S)-malate + NAD(+) = oxaloacetate + NADH + H(+). Functionally, catalyzes the reversible oxidation of malate to oxaloacetate. In Bacillus mycoides (strain KBAB4) (Bacillus weihenstephanensis), this protein is Malate dehydrogenase.